Reading from the N-terminus, the 229-residue chain is MKRKNIALIPAAGIGARFGADKPKQYVEIGSKTVLEHTLGIFERHEGVDLTVVVVSPEDTFADKVQTAFPQVRVWKNGGQTRAETVRNGVAKLLETGLAAETDNILVHDAARCCLPSEALTRLIEQAGNAAEGGILAIPVADTLKRADGGNISATVERTSLWQAQTPQLFRAGLLHRALAAENLDGITDEASAVEKLGIHPLLVQGDARNLKLTQPQDAYIVRLLLDAV.

It belongs to the IspD/TarI cytidylyltransferase family. IspD subfamily.

It catalyses the reaction 2-C-methyl-D-erythritol 4-phosphate + CTP + H(+) = 4-CDP-2-C-methyl-D-erythritol + diphosphate. The protein operates within isoprenoid biosynthesis; isopentenyl diphosphate biosynthesis via DXP pathway; isopentenyl diphosphate from 1-deoxy-D-xylulose 5-phosphate: step 2/6. Functionally, catalyzes the formation of 4-diphosphocytidyl-2-C-methyl-D-erythritol from CTP and 2-C-methyl-D-erythritol 4-phosphate (MEP). This Neisseria meningitidis serogroup C / serotype 2a (strain ATCC 700532 / DSM 15464 / FAM18) protein is 2-C-methyl-D-erythritol 4-phosphate cytidylyltransferase.